A 432-amino-acid polypeptide reads, in one-letter code: 3-phosphoshikimate 1-carboxyvinyltransferase (432 aa).

Residues Lys23, Ser24, and Arg28 each contribute to the 3-phosphoshikimate site. Lys23 contributes to the phosphoenolpyruvate binding site. 2 residues coordinate phosphoenolpyruvate: Gly95 and Arg123. The 3-phosphoshikimate site is built by Ser167, Gln169, Asp317, and Lys344. A phosphoenolpyruvate-binding site is contributed by Gln169. Asp317 acts as the Proton acceptor in catalysis. Phosphoenolpyruvate contacts are provided by Arg348 and Arg390.

Belongs to the EPSP synthase family. In terms of assembly, monomer.

It localises to the cytoplasm. It carries out the reaction 3-phosphoshikimate + phosphoenolpyruvate = 5-O-(1-carboxyvinyl)-3-phosphoshikimate + phosphate. Its pathway is metabolic intermediate biosynthesis; chorismate biosynthesis; chorismate from D-erythrose 4-phosphate and phosphoenolpyruvate: step 6/7. Functionally, catalyzes the transfer of the enolpyruvyl moiety of phosphoenolpyruvate (PEP) to the 5-hydroxyl of shikimate-3-phosphate (S3P) to produce enolpyruvyl shikimate-3-phosphate and inorganic phosphate. The polypeptide is 3-phosphoshikimate 1-carboxyvinyltransferase (Staphylococcus aureus (strain MRSA252)).